We begin with the raw amino-acid sequence, 115 residues long: Probable mycobacterial cidal antitoxin Rv3188 (115 aa).

The protein belongs to the MbcA/ParS/Xre antitoxin family. Forms a heterotetramer with cognate toxin Rv3189.

Probable antitoxin component of a type II toxin-antitoxin (TA) system. Neutralizes the activity of cognate toxin Rv3189 by blocking access to the toxin active site. The sequence is that of Probable mycobacterial cidal antitoxin Rv3188 from Mycobacterium tuberculosis (strain ATCC 25618 / H37Rv).